The following is a 484-amino-acid chain: uncharacterized protein (484 aa).

A helical transmembrane segment spans residues 25–45 (PLSLFVVLAAVPLPIYFSGLL). The EF-hand domain maps to 384 to 419 (LSFEETKELWVRADLDGNGVFDYEELKKIWNMTMVN). Ca(2+)-binding residues include D397, D399, N401, and E408.

The protein resides in the membrane. This is an uncharacterized protein from Arabidopsis thaliana (Mouse-ear cress).